Consider the following 493-residue polypeptide: Cytochrome P450 monooxygenase mfmF (493 aa).

The next 2 helical transmembrane spans lie at 3 to 23 (SLIP…RLFF) and 301 to 321 (VLFA…FHLV). C440 is a binding site for heme.

The protein belongs to the cytochrome P450 family. The cofactor is heme.

Its subcellular location is the membrane. It participates in secondary metabolite biosynthesis; terpenoid biosynthesis. Its function is as follows. Cytochrome P450 monooxygenase; part of the gene cluster that mediates the biosynthesis of the phthalide-terpenoid hybrid 11'-O-desmethylfendlerol. Within the pathway, mfmF catalyzes C-3 hydroxylation of 5-hydroxy-4-(hydroxymethyl)-7-methoxy-6-methylphthalide to yield cyclopolic acid. The biosynthesis of 11'-O-desmethylfendlerol begins with the NR-PKS mfmB that forms 3,5-dimethylorsellinic acid (DMOA), which is then transformed into the phthalide 5,7-dihydroxy-4-(hydroxymethyl)-6-methylphthalide by the cytochrome P450 monooxygenase mfmA and the hydrolase mfmC. Subsequently, the methyltransferase mfmE catalyzes 7-O-methylation to yield 5-hydroxy-4-(hydroxymethyl)-7-methoxy-6-methylphthalide, which undergoes C-3 hydroxylation by the cytochrome P450 monooxygenase mfmF. The resultant cyclopolic acid (2,5-dihydroxy-4-(hydroxymethyl)-7-methoxy-6-methylphthalide) is then farnesylated by the DMATS-type prenyltransferase mfmD to afford 5-O-farnesylcyclopolic acid. Finally, the Pyr4-family terpene cyclase mfmH cyclizes the farnesyl moiety of 5-O-farnesylcyclopolic acid into a drimane-like structure, thus completing the biosynthesis of 11'-O-desmethylfendlerol. The chain is Cytochrome P450 monooxygenase mfmF from Annulohypoxylon moriforme (Filamentous fungus).